Here is a 353-residue protein sequence, read N- to C-terminus: MTAILERRESESLWGRFCNWITSTENRLYIGWFGVLMIPTLLTATSVFIIAFIAAPPVDIDGIREPVSGSLLYGNNIISGAIIPTSAAIGLHFYPIWEAASVDEWLYNGGPYELIVLHFLLGVACYMGREWELSFRLGMRPWIAVAYSAPVAAATAVFLIYPIGQGSFSDGMPLGISGTFNFMIVFQAEHNILMHPFHMLGVAGVFGGSLFSAMHGSLVTSSLIRETTENESANEGYRFGQEEETYNIVAAHGYFGRLIFQYASFNNSSSLHFFLTAWPVVGIWFTALGISTMAFNLNGFNFNQSVVDSQGRVINTWADIINRANLGMEVMHERNAHNFPLDLAVVEAPSTNG.

T2 carries the post-translational modification N-acetylthreonine. Residue T2 is modified to Phosphothreonine. 3 helical membrane passes run 29–46 (YIGW…TATS), 118–133 (HFLL…EWEL), and 142–156 (WIAV…AATA). A chlorophyll a-binding site is contributed by H118. Residue Y126 participates in pheophytin a binding. The [CaMn4O5] cluster site is built by D170 and E189. Residues 197-218 (FHMLGVAGVFGGSLFSAMHGSL) form a helical membrane-spanning segment. A chlorophyll a-binding site is contributed by H198. A quinone is bound by residues H215 and 264–265 (SF). A Fe cation-binding site is contributed by H215. Residue H272 participates in Fe cation binding. A helical membrane pass occupies residues 274 to 288 (FLTAWPVVGIWFTAL). [CaMn4O5] cluster contacts are provided by H332, E333, D342, and A344. The propeptide occupies 345–353 (VVEAPSTNG).

This sequence belongs to the reaction center PufL/M/PsbA/D family. In terms of assembly, PSII is composed of 1 copy each of membrane proteins PsbA, PsbB, PsbC, PsbD, PsbE, PsbF, PsbH, PsbI, PsbJ, PsbK, PsbL, PsbM, PsbT, PsbX, PsbY, PsbZ, Psb30/Ycf12, at least 3 peripheral proteins of the oxygen-evolving complex and a large number of cofactors. It forms dimeric complexes. Requires The D1/D2 heterodimer binds P680, chlorophylls that are the primary electron donor of PSII, and subsequent electron acceptors. It shares a non-heme iron and each subunit binds pheophytin, quinone, additional chlorophylls, carotenoids and lipids. D1 provides most of the ligands for the Mn4-Ca-O5 cluster of the oxygen-evolving complex (OEC). There is also a Cl(-1) ion associated with D1 and D2, which is required for oxygen evolution. The PSII complex binds additional chlorophylls, carotenoids and specific lipids. as cofactor. Post-translationally, tyr-161 forms a radical intermediate that is referred to as redox-active TyrZ, YZ or Y-Z. In terms of processing, C-terminally processed by CTPA; processing is essential to allow assembly of the oxygen-evolving complex and thus photosynthetic growth.

The protein localises to the plastid. Its subcellular location is the chloroplast thylakoid membrane. It carries out the reaction 2 a plastoquinone + 4 hnu + 2 H2O = 2 a plastoquinol + O2. In terms of biological role, photosystem II (PSII) is a light-driven water:plastoquinone oxidoreductase that uses light energy to abstract electrons from H(2)O, generating O(2) and a proton gradient subsequently used for ATP formation. It consists of a core antenna complex that captures photons, and an electron transfer chain that converts photonic excitation into a charge separation. The D1/D2 (PsbA/PsbD) reaction center heterodimer binds P680, the primary electron donor of PSII as well as several subsequent electron acceptors. The sequence is that of Photosystem II protein D1 from Aethionema cordifolium (Lebanon stonecress).